A 692-amino-acid chain; its full sequence is Elongation factor G (692 aa).

Positions 8 to 283 (EMTRNIGIMA…AVLDYMPAPT (276 aa)) constitute a tr-type G domain. GTP contacts are provided by residues 17 to 24 (AHIDAGKT), 81 to 85 (DTPGH), and 135 to 138 (NKMD).

Belongs to the TRAFAC class translation factor GTPase superfamily. Classic translation factor GTPase family. EF-G/EF-2 subfamily.

It is found in the cytoplasm. Its function is as follows. Catalyzes the GTP-dependent ribosomal translocation step during translation elongation. During this step, the ribosome changes from the pre-translocational (PRE) to the post-translocational (POST) state as the newly formed A-site-bound peptidyl-tRNA and P-site-bound deacylated tRNA move to the P and E sites, respectively. Catalyzes the coordinated movement of the two tRNA molecules, the mRNA and conformational changes in the ribosome. This Citrifermentans bemidjiense (strain ATCC BAA-1014 / DSM 16622 / JCM 12645 / Bem) (Geobacter bemidjiensis) protein is Elongation factor G.